We begin with the raw amino-acid sequence, 953 residues long: Coatomer subunit beta (953 aa).

Residue Thr-2 is modified to N-acetylthreonine. HEAT repeat units lie at residues 96–131 (HEMI…KEAE), 132–168 (LLEP…NFEH), 240–276 (SERA…SAPT), 277–314 (AIKA…HPAH), 316–353 (RVLQ…SRNV), and 396–433 (DMAA…RFDN). Residue Lys-494 is modified to N6-acetyllysine.

In terms of assembly, oligomeric complex that consists of at least the alpha, beta, beta', gamma, delta, epsilon and zeta subunits. Interacts with SCYL1. Interacts with COPG1. Interacts (via trunk domain) with ARF1 (via switch I region); the interaction is direct. Interacts with KCNK2/TREK (via N-terminus); this interaction increases the channel-mediated whole cell currents and promotes plasma membrane expression of KCNK2/TREK. Interacts with anthrax lethal factor (LF); this interaction may facilitate endosomal vesicle membrane translocation of LF and its release from the lumen of endosomal vesicles to external milieu. Interacts with CAPN8 and PRKCE. Interacts with ARF1 (myristoylated); this interaction is required for binding of COPB1 to Golgi membranes. Interacts with STX17. Interacts with TMEM115. Interacts with HLA-G-B2M complex; this interaction mediates the endoplasmic reticulum (ER) retrieval of HLA-E-B2M complexes that bind low affinity peptides. Interacts with TMEM41B. (Microbial infection) Interacts (via C-terminus) with HIV-1 Nef; the interaction is direct. In terms of processing, proteolytically cleaved between Ser-528 and Ser-529 by CAPN8.

The protein localises to the cytoplasm. The protein resides in the golgi apparatus membrane. Its subcellular location is the cytoplasmic vesicle. It localises to the COPI-coated vesicle membrane. It is found in the cell membrane. The protein localises to the endoplasmic reticulum-Golgi intermediate compartment. Its function is as follows. The coatomer is a cytosolic protein complex that binds to dilysine motifs and reversibly associates with Golgi non-clathrin-coated vesicles, which further mediate biosynthetic protein transport from the ER, via the Golgi up to the trans Golgi network. Coatomer complex is required for budding from Golgi membranes, and is essential for the retrograde Golgi-to-ER transport of dilysine-tagged proteins. In mammals, the coatomer can only be recruited by membranes associated to ADP-ribosylation factors (ARFs), which are small GTP-binding proteins; the complex also influences the Golgi structural integrity, as well as the processing, activity, and endocytic recycling of LDL receptors. Plays a functional role in facilitating the transport of kappa-type opioid receptor mRNAs into axons and enhances translation of these proteins. Required for limiting lipid storage in lipid droplets. Involved in lipid homeostasis by regulating the presence of perilipin family members PLIN2 and PLIN3 at the lipid droplet surface and promoting the association of adipocyte surface triglyceride lipase (PNPLA2) with the lipid droplet to mediate lipolysis. Involved in the Golgi disassembly and reassembly processes during cell cycle. Involved in autophagy by playing a role in early endosome function. Plays a role in organellar compartmentalization of secretory compartments including endoplasmic reticulum (ER)-Golgi intermediate compartment (ERGIC), Golgi, trans-Golgi network (TGN) and recycling endosomes, and in biosynthetic transport of CAV1. Promotes degradation of Nef cellular targets CD4 and MHC class I antigens by facilitating their trafficking to degradative compartments. This Homo sapiens (Human) protein is Coatomer subunit beta.